Here is a 309-residue protein sequence, read N- to C-terminus: Ribonuclease Z (309 aa).

7 residues coordinate Zn(2+): His-63, His-65, Asp-67, His-68, His-145, Asp-216, and His-274. Residue Asp-67 is the Proton acceptor of the active site.

This sequence belongs to the RNase Z family. In terms of assembly, homodimer. Zn(2+) serves as cofactor.

It carries out the reaction Endonucleolytic cleavage of RNA, removing extra 3' nucleotides from tRNA precursor, generating 3' termini of tRNAs. A 3'-hydroxy group is left at the tRNA terminus and a 5'-phosphoryl group is left at the trailer molecule.. Functionally, zinc phosphodiesterase, which displays some tRNA 3'-processing endonuclease activity. Probably involved in tRNA maturation, by removing a 3'-trailer from precursor tRNA. The protein is Ribonuclease Z of Streptococcus pyogenes serotype M6 (strain ATCC BAA-946 / MGAS10394).